The sequence spans 458 residues: Monomethylamine methyltransferase MtmB1 (458 aa).

Residue Pyl202 is a non-standard amino acid, pyrrolysine.

It belongs to the monomethylamine methyltransferase family.

It carries out the reaction Co(I)-[methylamine-specific corrinoid protein] + methylamine + H(+) = methyl-Co(III)-[methylamine-specific corrinoid protein] + NH4(+). It functions in the pathway one-carbon metabolism; methanogenesis from methylamine. Functionally, catalyzes the transfer of the methyl group from monomethylamine to the corrinoid cofactor of MtmC. The sequence is that of Monomethylamine methyltransferase MtmB1 (mtmB1) from Methanosarcina barkeri (strain Fusaro / DSM 804).